A 49-amino-acid chain; its full sequence is Glutathione peroxidase (49 aa).

Belongs to the glutathione peroxidase family.

The catalysed reaction is 2 glutathione + H2O2 = glutathione disulfide + 2 H2O. Its activity is regulated as follows. Inhibited by Cu(2+), SDS and DTT. Activity is slightly increased by Fe(2+), Mn(2+), triton X-100 and EDTA. In terms of biological role, glutathione peroxidase which may protect the cell from oxidative damage. The sequence is that of Glutathione peroxidase from Lactiplantibacillus plantarum (Lactobacillus plantarum).